The following is a 292-amino-acid chain: ATP synthase gamma chain (292 aa).

This sequence belongs to the ATPase gamma chain family. As to quaternary structure, F-type ATPases have 2 components, CF(1) - the catalytic core - and CF(0) - the membrane proton channel. CF(1) has five subunits: alpha(3), beta(3), gamma(1), delta(1), epsilon(1). CF(0) has three main subunits: a, b and c.

The protein localises to the cell inner membrane. Its function is as follows. Produces ATP from ADP in the presence of a proton gradient across the membrane. The gamma chain is believed to be important in regulating ATPase activity and the flow of protons through the CF(0) complex. The protein is ATP synthase gamma chain of Brucella abortus (strain S19).